The following is a 254-amino-acid chain: Persulfide dioxygenase ETHE1, mitochondrial (254 aa).

The transit peptide at Met1 to Lys7 directs the protein to the mitochondrion. Residues Ser14 and Ser19 each carry the phosphoserine modification. Lys32 carries the post-translational modification N6-acetyllysine; alternate. Lys32 carries the post-translational modification N6-succinyllysine; alternate. Position 66 is an N6-acetyllysine (Lys66). Residues His79, His135, and Asp154 each contribute to the Fe cation site.

This sequence belongs to the metallo-beta-lactamase superfamily. Glyoxalase II family. Homodimer. Monomer. Interacts with TST. May interact with RELA. Fe(2+) serves as cofactor.

Its subcellular location is the cytoplasm. It localises to the nucleus. It is found in the mitochondrion matrix. It catalyses the reaction S-sulfanylglutathione + O2 + H2O = sulfite + glutathione + 2 H(+). Its activity is regulated as follows. Glutathione increases enzyme activity. Sulfur dioxygenase that plays an essential role in hydrogen sulfide catabolism in the mitochondrial matrix. Hydrogen sulfide (H(2)S) is first oxidized by SQRDL, giving rise to cysteine persulfide residues. ETHE1 consumes molecular oxygen to catalyze the oxidation of the persulfide, once it has been transferred to a thiophilic acceptor, such as glutathione (R-SSH). Plays an important role in metabolic homeostasis in mitochondria by metabolizing hydrogen sulfide and preventing the accumulation of supraphysiological H(2)S levels that have toxic effects, due to the inhibition of cytochrome c oxidase. First described as a protein that can shuttle between the nucleus and the cytoplasm and suppress p53-induced apoptosis by sequestering the transcription factor RELA/NFKB3 in the cytoplasm and preventing its accumulation in the nucleus. The sequence is that of Persulfide dioxygenase ETHE1, mitochondrial (ETHE1) from Bos taurus (Bovine).